The sequence spans 389 residues: Phosphopentomutase (389 aa).

Mn(2+)-binding residues include aspartate 9, aspartate 282, histidine 287, aspartate 323, histidine 324, and histidine 335.

This sequence belongs to the phosphopentomutase family. Mn(2+) is required as a cofactor.

It localises to the cytoplasm. It catalyses the reaction 2-deoxy-alpha-D-ribose 1-phosphate = 2-deoxy-D-ribose 5-phosphate. The enzyme catalyses alpha-D-ribose 1-phosphate = D-ribose 5-phosphate. It functions in the pathway carbohydrate degradation; 2-deoxy-D-ribose 1-phosphate degradation; D-glyceraldehyde 3-phosphate and acetaldehyde from 2-deoxy-alpha-D-ribose 1-phosphate: step 1/2. Functionally, isomerase that catalyzes the conversion of deoxy-ribose 1-phosphate (dRib-1-P) and ribose 1-phosphate (Rib-1-P) to deoxy-ribose 5-phosphate (dRib-5-P) and ribose 5-phosphate (Rib-5-P), respectively. The protein is Phosphopentomutase of Kosmotoga olearia (strain ATCC BAA-1733 / DSM 21960 / TBF 19.5.1).